The chain runs to 263 residues: Adaptin ear-binding coat-associated protein 2 (263 aa).

2 disordered regions span residues 166–194 (KKKE…PPGG) and 219–263 (APSS…WVQF). Ser-181 bears the Phosphoserine mark. Short sequence motifs (WXXF motif) lie at residues 240 to 243 (WGDF) and 260 to 263 (WVQF). A compositionally biased stretch (low complexity) spans 246 to 263 (STGSTSSQTQPGTGWVQF).

Belongs to the NECAP family. As to quaternary structure, interacts with AP1G1 and AP2A1 components of the adapter protein complexes AP-1 and AP-2. Interacts with the GAE domain proteins GGA1, GGA2 and GGA3.

It localises to the cytoplasmic vesicle. The protein resides in the clathrin-coated vesicle membrane. Its subcellular location is the cell membrane. Functionally, involved in endocytosis. This chain is Adaptin ear-binding coat-associated protein 2 (NECAP2), found in Homo sapiens (Human).